A 4965-amino-acid chain; its full sequence is MSIMSSINECLATCKVLISPSMLPLHVLLSVEQVESTVVEIVERSLEFCLLYLEKSSYACEDYGLLNEVAYFMECVLLRGTPSKVYSLEPSVVNDVIEQWSSVQVDSERISPQEKYFCYLKGFNCSNSGDDLQRFRLTLSPECLQQDYVIAENTESSHTASPNGMVSIAQHFAVVHLHCIPVLLTLVQKLCQSPALDVIEDTNFNMRLSFGQRILKLVHGLAMEFPCDASDAMMLCSVARCTDSLPVLFKLKFKFANHDRVFSGDGVGTVLLQILDEFLQLIHIIFCNSDICCTVQVCILASLLEIFSPEKWKYDRSAACLMPPLVYSPHIVQYVLKLLNDTKRWTSRVDRDRPGKDVLGYSCNSETDGLSCHARSKKVPLLKKYTSEEYLQLIFPSEEQWLDDLVHLIFFLHEEGVKSMPLLEKPQMSCTKQVTLSELESVASHEEEALFGNLFAEARSTGVADSVEQPISLGSGPSSSQHGPIQLAADLICFMKMSIFSPEWCTAIYVDACRKFHSNHLEQFLSILQCPAFCSDESIATTSLSEVNSLHINTACFELLQMFLISHECPASLREDLVDKVFNAENGMYTYNNYTLALVARAIISGASSIYNLGRKVFVQENETASTWSKCIWTHKMGFTPVKTPACLAAYVVVSGNTSVMVAYEVKIQNEGDILLKEGQSRSMNDYLPSFTAEVVEGIFADTVKEYASTSSLFPQLIDVTPAHAEIYFDKSALEALGLNFANLGSNISEILGVWKGRKAEVAEDLIAERYLFLICWSTLSGIGYSGGYEGLLNPDFADVNFFISFALSVSDDASSLLDANLPSVIFGFLKLLQSEILCGPSVLESWDFLRKGAWLSLILSLINTGFWGHQTSGKPDVDLQGKQVVQDAEIFGKSLLTFISENSGHCLHVLSSLLETYLHAFKEAFISFVVEKGRVCEDHCYPSWLLKHSAFDKSKHPLLFEKVGSNIGMLEPICDLSSRIDRVATKLGDGRKEYFLLKCLLHGFPVNSASNNSAILSCVLVINEIIYMLNGCIKIMQPNDRDLVDVGVISKLLSMIMTIKSDGMFTSIHKLCDSIFMSLIDQKDDLAGYSDLFVLKQLEGYLADINSKEIMDNEVKEIIVFTIVDLVEDLRSKTNVFKFFLGEAEGAPERANSLFALEQADMSVFIDVLDKCQSEQVNLKILNLFTDILGDGLCPDLKQKLQHKFIGMDVSCFSSWLEFRTLGHSMKIESTNSTTSGPTALRELTMDFLMRLTCPSSETLAKELQHHLFDSMLLLLDKAFMSCDLQIVKAHFHFIAQLSTDESHFKELFEKTLKLMENMVGNEGLLHTLKFLFTCVESVFGDAGSNRSALKRLSSKSSGNSFGSGSLIPKQLKNSDSLVLRTNQESNSTVDCDASSGEEDEDDGTSDGELVSIDRDEEEDGNSERALATKVCTFTSSGSNFMEQHWYFCYTCDLTVSKGCCSVCAKVCHQGHRVVYSRSSRFFCDCGAGGVRGSSCQCLKPRKFTGTSSVSPPVTSSFQPILPYHEDVEPVADSGSDFEDDISTEAENCIKLSVPKGFSDELPVFLKNLDVEVRMLELCKKLLPMILSQRELNLLKDRKVFLGGEMPMSQASDIFQLKKAFKSGSLDLKIKADYPNSRELKSHLANGSLTKSLLSISIRGKLAVGEGDKVAIFDVGQIIGQPTAAPITADKTNVKPLSRNIVRFEIVHLIFNPLVEHYLSVAGYEDCQVLTLNSRGEVTDRLAIELALQGAYIRCVEWVPGSQVQLMVVTNKFVKIYDLSQDNISPLHYFTVADDIIVDATLVPSSMGKLVLLVLSEGGLLYRLNVALAGDVGAKTLTDTVLVKDAVSMHKGLSLYFSSTYRLLFVSHQDGTTYMGRLDGDSSSITELSYICENDQDGKSKPAGLYRWRELIAGSGALACLSKFKSNSPLAVSLGPHELFAHNMRHASGSNAPVVGIAAYKPLSKDKAHCLLLYDDGSLNIYSHTPNGSDSSTTLTAEQTKKLGSSILSSRAYAGTKPEFPLDFFEKTTCITCDVKFNSDTTKSSDSESIKQRLSSDDGYLESLTSAGFKVTISNPNPDIVMVGCRIHVGNTSASNIPSEITIFHRVIKLDEGMRSWYDIPFTTAESLLADEEFTIVVGRTFDGSSIPRIDSIEVYGRAKDEFGWKEKMDAALDMEAHVLGGSSASGKSGKKAQTMQAAPIQEQVLADALRILSRIYLLCQPGFCTDTIDADMELNNLKCRSLLETIFQSDREPLLHSAACRVLQAVFPKKEIYYHVKDTMRLLGVIKSLPSITSRIGVGGAASSWVTKEFIAQIHTVSKVAVHRKSNLASFLETHGTELVDGLMQVFWGILDLDRPDTQRINSLVVPCVEFIYSYAECLALHSNEKSGVSVAPAVALLKKLLFAPYEAVQTSSSLAISSRFLQVPFPKQTMIANDDAPDNHAKASAASNSTTGNAQVMIEEDPATSSVQYCCDGCSTVPILRRRWHCNICPDFDLCETCYEILDADRLPAPHSRDHPMSAIPIELDTFGGEGNEIHFSVDELTDSSVLQAPADRTIQTSPSSIHVLDASESVDFHGSMTEQRTVSISASKRAINSLLLSRLIEELSGWMETTAGTRAIPIMQLFYRLSSAVGGPFMDSTKPENLDLEKFVKWLIDEINISKPFPAKTRCSFGEVSILVFMFFTLMFRNWHQPGTDGSHSKSGGSSDLTEKGPVHVQVSTTTLQSSNDDHDKNEFASQLIRACSALRQQSFLNYLMDILQQLVHVFKSSSINGEGGSSSSGCGSLLTVRRELPAGNFSPFFSDSYAKSHPTDLFMDYYKLLLENTFRLVYSMVRPEKEKSADKDKSCKVPNTKDLKLDGYQDVLCSYISNAHTTFVRRYARRLFLHLCGSKTHYYSVRDSWQYSHEVKKLHKIINKSGGFRNPVPYERSVKLIKCLSTLCDVAASRPRNWQKFCLKHTDLLPFLMDNFYYFSEECIVQTLKLLNLAFYSGKDANHNAQKTESGDIGSSTRTGSQSSDSKKKRKGDDSSEGSSEKSCMDMEQAVVVFTGKDGDVLKRFVDTFLLEWNSTSVRHEAKSVLFGLWYHAKSSFKENMLTTLLQKVKYLPMYGQNIIEYTDLMTCLLGKANDSTAKQSDTELLNKCLTSDVVSCIFDTLHSQNELLANHPNSRIYNTLSCLVEFDGYYLESEPCVTCSCPDVPYSRMKLESLKSETKFTDNRIIVKCTGSFTIQSVTMNVYDARKSKSVKVLNLYYNNRPVTDLSELKNNWSLWKRAKSCHLTFNQTELKVEFPIPITACNFMIELDSFYENLQASSLESLQCPRCSRSVTDKHGICSNCHENAYQCRQCRNINYENLDSFLCNECGYSKYGRFEFHFMAKPSFSFDNMENDDDMRKGLTAIESESENAHRRYQQLMGFKKPLIKLVSSIGEQEIDSQQKDAVQQMMVSLPGPTGKVNRKIALLGVLYGEKCKAAFDSVSKSVQTLQGLRRVLMTYLHQKNSNDTDALPACSIPRSPSSCYGCSTTFVTQCLELLQVLSKHATSRKQLVSAGILSELFENNIHQGPRTARTLARAVLSSFSEGDADAVQELNNLIQKKVMYCLEHHRSMDISQSTREELLLLSETCALVDEFWEARLRVAFQLLFSSIKVGAKHPAISEHIILPCLRIISQACTPPKSDSGEKEPGMGKSSLMQAKNDDTVGHSVTNLSTSKTQSELSGKIPDGSRRRQDISLLSYSEWESGASYLDFVRRQYKVSQAVKGLQKTRHDSQKSDYLVLKYGLRWKRRACRKSSKGDFSKFALGSWVSDLILSSCSQSIRSEICTLISLLCPSNSSRQFQLLNLLMSLLPRTLSAGESAAEYFELLGTMIDTEASRLFLTVRGCLTTLCSLITKEVSNVESQERSLSIDISQGFILHKLVELLNKFLEIPNIRARFMSDNLLSDVLEAFLVIRGLVVQKTKLINDCNRLLKDLLDSLLVESTANKRQFIRACISGLQKHVKEKKRRTSLFILEQLCNLICPVKPEPVYLLILNKAHTQEEFIRGSMTRNPYSSAEIGPLMRDVKNKICHQLDLIGLLEDDYGMELLVAGNIISLDLSISQVYEQVWRKHHGQTQHSLSNASQLSAAASSVRDCPPMTVTYRLQGLDGEATEPMIKELEDEREESQDPEVEFAIAGAVRECGGLEIILSMIQSLREDELRSNQEELGSVLNLLKYCCKIRENRCALLRLGALGLLLETARRAFSVDAMEPAEGILLIVESLTMEANESDISIAQSVFTTTTEETGAGEEAKKIVLMFLERLCPPDGAKKSNKQQRNEEMVARILPNLTYGEPAAMEALVLHFEPYLMNWSEFDQLQKQHEENPKDETLSKNASMQRSAVENFVRVSESLKTSSCGERLKEIILEKGITKAAVGHLRESFASAGQASFRTSAEWTVGLKLPSIPLILSMLKGLAKGDLPTQKCVDEEDILPLLHALEGVPGENEIGARAENLLDTLANKENNGDGFLAEKIQELRHATRDEMRRRALKKREMLLQGLGMRQEFASDGGRRIVVSQPIIEGLDDVEEEEDGLACMVCREGYTLRPTDMLGVYAFSKRVNLGATSSGSGRGDCVYTTVSHFNIIHYQCHQEAKRADAALKNPKKEWDGATLRNNETLCNCIFPLRGPSVPPGQYTRCLDQYWDQLNSLGRADGSRLRLLTYDIVLMLARFATGASFSTDCKGGGRESNSRFLPFMIQMASHLVDGSANQQRHVMAKAVTSYLSSSPSTPESPVRLSALSGARGGSGSSEETVQFMMVNSLLSESYESWLQHRPAFLQRGIYHAYMQHKHGRSTLKLSADTSSSAVRSDEGSSADSNDSKRLFAIVQPMLVYTGLIEQLQQFFKKGKSSGTQKVGEKDGSSGGNLEAWEIMMKEKLGNMKEMLGFSKDVLSWLEDMTSSEDLQEAFDVMGALPDVFSGGHTTCEDFVRAIIHGAKS.

Helical transmembrane passes span 289 to 309 (SDIC…IFSP), 646 to 666 (ACLA…AYEV), and 772 to 792 (LFLI…YEGL). The segment at 1383–1425 (TNQESNSTVDCDASSGEEDEDDGTSDGELVSIDRDEEEDGNSE) is disordered. Residues 1397–1407 (SGEEDEDDGTS) show a composition bias toward acidic residues. The UBR-type zinc finger occupies 1431–1502 (KVCTFTSSGS…RGSSCQCLKP (72 aa)). The tract at residues 2437–2456 (DDAPDNHAKASAASNSTTGN) is disordered. A compositionally biased stretch (low complexity) spans 2445 to 2456 (KASAASNSTTGN). The ZZ-type zinc-finger motif lies at 2469 to 2528 (SVQYCCDGCSTVPILRRRWHCNICPDFDLCETCYEILDADRLPAPHSRDHPMSAIPIELD). Residues Cys2474, Cys2477, Cys2489, Cys2492, Cys2498, Cys2501, His2514, and His2518 each contribute to the Zn(2+) site. A disordered region spans residues 2997–3037 (NAQKTESGDIGSSTRTGSQSSDSKKKRKGDDSSEGSSEKSC). Positions 3007-3017 (GSSTRTGSQSS) are enriched in low complexity. The segment covering 3024-3037 (KGDDSSEGSSEKSC) has biased composition (basic and acidic residues). An MYND-type; degenerate zinc finger spans residues 3319–3359 (CPRCSRSVTDKHGICSNCHENAYQCRQCRNINYENLDSFLC). The interval 3672–3721 (PKSDSGEKEPGMGKSSLMQAKNDDTVGHSVTNLSTSKTQSELSGKIPDGS) is disordered. Residues 3699–3713 (HSVTNLSTSKTQSEL) show a composition bias toward polar residues. Residues 4433-4963 (PSIPLILSML…DFVRAIIHGA (531 aa)) are UBR4 E3 catalytic module. The segment at 4562-4681 (GLACMVCREG…WDQLNSLGRA (120 aa)) adopts a HemiRING-type zinc-finger fold. The Zn(2+) site is built by Cys4565, Cys4568, His4615, and Cys4618. One can recognise a UZI domain in the interval 4684 to 4963 (SRLRLLTYDI…DFVRAIIHGA (280 aa)). Positions 4753-4770 (SSSPSTPESPVRLSALSG) are enriched in low complexity. Disordered regions lie at residues 4753 to 4778 (SSSP…SGSS) and 4822 to 4846 (STLK…ADSN). Polar residues predominate over residues 4824 to 4845 (LKLSADTSSSAVRSDEGSSADS).

This sequence belongs to the UBR4 family.

The protein resides in the membrane. Its function is as follows. Required for auxin efflux and polar auxin transport (PAT) influencing auxin-mediated developmental responses (e.g. cell elongation, apical dominance, lateral root production, inflorescence architecture, general growth and development). In Oryza sativa subsp. japonica (Rice), this protein is Auxin transport protein BIG.